A 493-amino-acid polypeptide reads, in one-letter code: MKPTSLPKNFTNNPAPKAVTGFKLDNGRAYRKLNEAWPVYEPLDSTKDGKGKDKDGWTTSGASEPKGDAPLVSSTGSQMSAVTDSQQSGHNSGLVSLAQRSTTVAVQKSDSSGFQGQGTTDNKFQKYLNTAQALHQMGVIVPSLETWPGKPSTGIATRAGGGVSVQAATRQSSSTNEDLPNVITQLYHTSTSQLAYLNGQIVVMGSNAVPSLWYWVVDERTTSGSATWWAKTHLNFGTEVQKSFVENQLGFKDDSNSDSKNSNLKAQDLTQPAYLITGLDVVQDHLVFAAFKAGAVGYDMTTDSNASTKDQALAWSTTAGLDSAGGYNNLVENTAGLNGPINDLFTLLDTFAYVTPVSGMKGGSQNNEEVQTKYPVKDDSKASAKIASLINASPLNSYGDDGVTVFDALGLNFNFKLDEARLPSRTDQLLVYGIVNESELKSARENAQSTSDDNSNTKVKWTKPPRTTSPCRITTVPISPKRVTEEERSSGNH.

Residues 1–14 are compositionally biased toward polar residues; sequence MKPTSLPKNFTNNP. Disordered stretches follow at residues 1–92 and 441–493; these read MKPT…GHNS and KSAR…SGNH. Composition is skewed to basic and acidic residues over residues 25–34 and 44–56; these read DNGRAYRKLN and DSTK…DKDG. 2 stretches are compositionally biased toward polar residues: residues 72–92 and 445–472; these read VSST…GHNS and ENAQ…SPCR. Residues 482 to 493 are compositionally biased toward basic and acidic residues; sequence RVTEEERSSGNH.

It belongs to the MgpC family.

In Mycoplasma pneumoniae (strain ATCC 29342 / M129 / Subtype 1) (Mycoplasmoides pneumoniae), this protein is Putative MgpC-like protein MPN_414.